We begin with the raw amino-acid sequence, 205 residues long: Glycerol-3-phosphate acyltransferase (205 aa).

5 helical membrane-spanning segments follow: residues 4–24 (IAPG…AILV), 56–76 (VAVL…AYAL), 81–101 (FWLG…VFFG), 112–132 (FGAI…TWLL), and 138–158 (GYSS…VWWF).

Belongs to the PlsY family. As to quaternary structure, probably interacts with PlsX.

The protein resides in the cell inner membrane. The enzyme catalyses an acyl phosphate + sn-glycerol 3-phosphate = a 1-acyl-sn-glycero-3-phosphate + phosphate. Its pathway is lipid metabolism; phospholipid metabolism. In terms of biological role, catalyzes the transfer of an acyl group from acyl-phosphate (acyl-PO(4)) to glycerol-3-phosphate (G3P) to form lysophosphatidic acid (LPA). This enzyme utilizes acyl-phosphate as fatty acyl donor, but not acyl-CoA or acyl-ACP. The polypeptide is Glycerol-3-phosphate acyltransferase (Citrobacter koseri (strain ATCC BAA-895 / CDC 4225-83 / SGSC4696)).